Consider the following 297-residue polypeptide: Protein CANDIDATE G-PROTEIN COUPLED RECEPTOR 8 (297 aa).

The N-linked (GlcNAc...) asparagine glycan is linked to Asn-20. The next 7 helical transmembrane spans lie at 34–54 (GFLH…YLAY), 70–90 (IMIA…AWCC), 107–127 (LTLF…AFLF), 142–162 (FLIS…FLFG), 180–200 (WGLW…VFLM), 215–235 (FYNY…ASAF), and 242–262 (FGFW…LPLL).

The protein belongs to the UPF0359 family.

The protein resides in the membrane. In terms of biological role, G-protein coupled receptor. Plays a role in plants and microbes interactions. The sequence is that of Protein CANDIDATE G-PROTEIN COUPLED RECEPTOR 8 from Arabidopsis thaliana (Mouse-ear cress).